A 103-amino-acid chain; its full sequence is Putative inactive recombination-promoting nuclease-like protein YjiP (103 aa).

It belongs to the Rpn/YhgA-like nuclease family.

Functionally, this pseudogene is the N-terminal fragment of low activity DNA endonuclease RpnD which probably yields 3'-hydroxyl ends. The intact protein can be seen in this entry (AC B7NGZ6). Expression of the repaired protein increases the frequency of recA-independent recombination, but also decreases viability probably via DNA damage; in a RecA strain expression has no effect on viability but does induce the SOS repair response. May play a role in horizontal gene transfer. This chain is Putative inactive recombination-promoting nuclease-like protein YjiP (yjiP), found in Escherichia coli (strain K12).